Here is a 936-residue protein sequence, read N- to C-terminus: Bifunctional uridylyltransferase/uridylyl-removing enzyme (936 aa).

The segment at 1–372 (MTIPRIRQPR…SIATLLMRKR (372 aa)) is uridylyltransferase. Positions 373-727 (NLGDFVLDGG…VLPDPERAVS (355 aa)) are uridylyl-removing. The HD domain occupies 488–610 (TDEHTIRAIG…VQSVERLHLL (123 aa)). ACT domains are found at residues 728–809 (EVLV…KALR) and 840–915 (VIEI…TVPR). Residues 915 to 930 (RKVEEGAEQGAEKADA) show a composition bias toward basic and acidic residues. Residues 915–936 (RKVEEGAEQGAEKADAGEIVAA) are disordered.

Belongs to the GlnD family. Mg(2+) serves as cofactor.

The catalysed reaction is [protein-PII]-L-tyrosine + UTP = [protein-PII]-uridylyl-L-tyrosine + diphosphate. It catalyses the reaction [protein-PII]-uridylyl-L-tyrosine + H2O = [protein-PII]-L-tyrosine + UMP + H(+). Its activity is regulated as follows. Uridylyltransferase (UTase) activity is inhibited by glutamine, while glutamine activates uridylyl-removing (UR) activity. Its function is as follows. Modifies, by uridylylation and deuridylylation, the PII regulatory proteins (GlnB and homologs), in response to the nitrogen status of the cell that GlnD senses through the glutamine level. Under low glutamine levels, catalyzes the conversion of the PII proteins and UTP to PII-UMP and PPi, while under higher glutamine levels, GlnD hydrolyzes PII-UMP to PII and UMP (deuridylylation). Thus, controls uridylylation state and activity of the PII proteins, and plays an important role in the regulation of nitrogen fixation and metabolism. The sequence is that of Bifunctional uridylyltransferase/uridylyl-removing enzyme from Rhodospirillum rubrum (strain ATCC 11170 / ATH 1.1.1 / DSM 467 / LMG 4362 / NCIMB 8255 / S1).